The chain runs to 227 residues: Leucyl/phenylalanyl-tRNA--protein transferase (227 aa).

This sequence belongs to the L/F-transferase family.

Its subcellular location is the cytoplasm. It catalyses the reaction N-terminal L-lysyl-[protein] + L-leucyl-tRNA(Leu) = N-terminal L-leucyl-L-lysyl-[protein] + tRNA(Leu) + H(+). It carries out the reaction N-terminal L-arginyl-[protein] + L-leucyl-tRNA(Leu) = N-terminal L-leucyl-L-arginyl-[protein] + tRNA(Leu) + H(+). The catalysed reaction is L-phenylalanyl-tRNA(Phe) + an N-terminal L-alpha-aminoacyl-[protein] = an N-terminal L-phenylalanyl-L-alpha-aminoacyl-[protein] + tRNA(Phe). Functionally, functions in the N-end rule pathway of protein degradation where it conjugates Leu, Phe and, less efficiently, Met from aminoacyl-tRNAs to the N-termini of proteins containing an N-terminal arginine or lysine. This chain is Leucyl/phenylalanyl-tRNA--protein transferase, found in Desulfotalea psychrophila (strain LSv54 / DSM 12343).